Here is an 805-residue protein sequence, read N- to C-terminus: Sucrose synthase (805 aa).

The GT-B glycosyltransferase stretch occupies residues 275 to 752 (MVFNVVILSP…GLQRIEEKYT (478 aa)).

The protein belongs to the glycosyltransferase 1 family. Plant sucrose synthase subfamily.

It carries out the reaction an NDP-alpha-D-glucose + D-fructose = a ribonucleoside 5'-diphosphate + sucrose + H(+). Functionally, sucrose-cleaving enzyme that provides UDP-glucose and fructose for various metabolic pathways. The polypeptide is Sucrose synthase (Medicago sativa (Alfalfa)).